Consider the following 415-residue polypeptide: Squalene synthase 12 (415 aa).

2 helical membrane-spanning segments follow: residues 281-301 (AIFRFCAIPQIMAIGTLALCF) and 391-411 (LIAIIFIILAILYAYLSSNLL).

It belongs to the phytoene/squalene synthase family. The cofactor is Mg(2+). It depends on Mn(2+) as a cofactor.

Its subcellular location is the endoplasmic reticulum membrane. The catalysed reaction is 2 (2E,6E)-farnesyl diphosphate + NADH + H(+) = squalene + 2 diphosphate + NAD(+). The enzyme catalyses 2 (2E,6E)-farnesyl diphosphate + NADPH + H(+) = squalene + 2 diphosphate + NADP(+). The protein operates within terpene metabolism; lanosterol biosynthesis; lanosterol from farnesyl diphosphate: step 1/3. Component of the triterpene saponins (e.g. ginsenosides or panaxosides) and phytosterols biosynthetic pathways. Catalyzes the biosynthesis of squalene. This chain is Squalene synthase 12, found in Panax ginseng (Korean ginseng).